The following is a 723-amino-acid chain: MKKLWLMGLLLASFFTTVAQNNAQTKSNSDEEIDKKVATLISQMTLDEKIAEMTQDAPANERLGIPSMKYGEALHGLWLVLDYYGNTTVYPQAVAAASTWEPELIKKMASQTAREARALGVTHCYSPNLDVYAGDARYGRVEESYGEDPYLVSRMGVAFIEGLQGTGEEQFDENHVIATAKHFVGYPENRRGINGGFSDMSERRLREVYLPPFEAAVKEAGVGSVMPGHQDFNGVPCHMNTWLLKDILRDELGFDGFIVSDNNDVGRLETMHFIAENRTEAAILGLKAGVDMDLVIGKNVELATYHTNILKDTILKNPALMKYIDQATSRILTAKYKLGLFDAKPKKIDTETVETGTDEHREFALELAEKSIIMLKNDNNLLPLDVSKIKSLAVIGPNAHEERPKKGTYKLLGGYSGLPPYYVSVLDGLKKKVGEHVKINYAKGCDIDSFSKEGFPEAISAAKNSDAVVLVVGSSHKTCGEGGDRADLDLYGVQKELVEAIHKTGKPVIVVLINGRPLSINYIAENIPSILETWYGGMRAGDAVANVIFGDVNPGGKLTMSFPRDVGQVPVTYLERPDFIGSGKGQYRFSDKTPLFPFGFGLSYTTFKYGTPKLDNTSIAANGTTTVSVEVTNTGKVTGDEVVQMYVRDDYASVGRYLKMLKGFKRITLKPGETKTVSFKLGFDELNILNQDLKKVVEPGTFTISVGASSKADDLKTVSLTVK.

A signal peptide spans 1 to 19; sequence MKKLWLMGLLLASFFTTVA.

Belongs to the glycosyl hydrolase 3 family.

The protein resides in the periplasm. Functionally, xylosidase involved in ulvan degradation. Ulvan is the main polysaccharide component of the Ulvales (green seaweed) cell wall. It is composed of disaccharide building blocks comprising 3-sulfated rhamnose (Rha3S) linked to D-glucuronic acid (GlcA), L-iduronic acid (IduA), or D-xylose (Xyl). Beta-xylosidase converts Xyl-Rha3S, a product of alpha-L-rhamnosidase acting on Rha-Xyl-Rha3S oligosaccharides, further to Xyl and Rha3S. The enzyme is able to degrade 4-methylumbelliferyl-beta-D-xylopyranoside (MUX) in vitro. In Formosa agariphila (strain DSM 15362 / KCTC 12365 / LMG 23005 / KMM 3901 / M-2Alg 35-1), this protein is Beta-xylosidase.